The chain runs to 550 residues: Rab GTPase-activating protein 22 (550 aa).

Residues 1–49 (MKALRRSYTSTSSGNSSSSSSLPSSSSSSLPSSSSSSPPSSNSNSYSNS) are disordered. Residues 7–49 (SYTSTSSGNSSSSSSLPSSSSSSLPSSSSSSPPSSNSNSYSNS) show a composition bias toward low complexity. The 335-residue stretch at 126–460 (GVDPSIRAEV…CLWEVMWADQ (335 aa)) folds into the Rab-GAP TBC domain.

As to quaternary structure, interacts with AGT1 in peroxisome under biotic stress conditions. In terms of tissue distribution, expressed in root meristems, vascular tissues, guard cells, trichomes, styles and receptacles.

It is found in the nucleus. The protein resides in the peroxisome. Involved in defense response against fungal and bacterial pathogens. Acts as a negative regulator of jasmonate (JA) responses during infection by the soil-born fungal pathogen Verticillium longisporum. Involved in abscisic acid-dependent stomata closure in response to infection by V.longisporum and Pseudomonas syringae. May be a downstream component of brassinosteroid-mediated signaling. The sequence is that of Rab GTPase-activating protein 22 from Arabidopsis thaliana (Mouse-ear cress).